Reading from the N-terminus, the 197-residue chain is MEPFTTHTGRAVPLRRSNVDTDQIIPAVYLKRVSRTGFADGLFAAWRQDPGFVLNRPEFAGADILVAGPDFGTGSSREHAVWALQDYGFRVVISPRFGDIFRNNALKGGLLAVVLPESDVEALWDVVESDPATPVTVDLVTREVRYADVVRGFDIDDYTRWRLMEGLDDIGLTLRHADAIDAFEARRPAWKPTTRAS.

Belongs to the LeuD family. LeuD type 1 subfamily. As to quaternary structure, heterodimer of LeuC and LeuD.

It carries out the reaction (2R,3S)-3-isopropylmalate = (2S)-2-isopropylmalate. The protein operates within amino-acid biosynthesis; L-leucine biosynthesis; L-leucine from 3-methyl-2-oxobutanoate: step 2/4. Catalyzes the isomerization between 2-isopropylmalate and 3-isopropylmalate, via the formation of 2-isopropylmaleate. The protein is 3-isopropylmalate dehydratase small subunit of Acidothermus cellulolyticus (strain ATCC 43068 / DSM 8971 / 11B).